Here is a 289-residue protein sequence, read N- to C-terminus: ATP synthase gamma chain (289 aa).

The protein belongs to the ATPase gamma chain family. F-type ATPases have 2 components, CF(1) - the catalytic core - and CF(0) - the membrane proton channel. CF(1) has five subunits: alpha(3), beta(3), gamma(1), delta(1), epsilon(1). CF(0) has three main subunits: a, b and c.

It is found in the cell inner membrane. Its function is as follows. Produces ATP from ADP in the presence of a proton gradient across the membrane. The gamma chain is believed to be important in regulating ATPase activity and the flow of protons through the CF(0) complex. This Acinetobacter baumannii (strain AB307-0294) protein is ATP synthase gamma chain.